The primary structure comprises 311 residues: Putative ribose-phosphate pyrophosphokinase 2 (311 aa).

ATP contacts are provided by residues 38–40 (DGE) and 97–98 (RQ). Residues histidine 131 and aspartate 171 each coordinate Mg(2+). Position 219 (aspartate 219) interacts with D-ribose 5-phosphate.

It belongs to the ribose-phosphate pyrophosphokinase family. Class I subfamily. Homohexamer. Mg(2+) serves as cofactor.

It is found in the cytoplasm. The enzyme catalyses D-ribose 5-phosphate + ATP = 5-phospho-alpha-D-ribose 1-diphosphate + AMP + H(+). It functions in the pathway metabolic intermediate biosynthesis; 5-phospho-alpha-D-ribose 1-diphosphate biosynthesis; 5-phospho-alpha-D-ribose 1-diphosphate from D-ribose 5-phosphate (route I): step 1/1. Involved in the biosynthesis of the central metabolite phospho-alpha-D-ribosyl-1-pyrophosphate (PRPP) via the transfer of pyrophosphoryl group from ATP to 1-hydroxyl of ribose-5-phosphate (Rib-5-P). The sequence is that of Putative ribose-phosphate pyrophosphokinase 2 from Listeria innocua serovar 6a (strain ATCC BAA-680 / CLIP 11262).